The following is a 108-amino-acid chain: CDGSH iron-sulfur domain-containing protein 1 (108 aa).

The chain crosses the membrane as a helical; Signal-anchor for type III membrane protein span at residues Trp-13–Tyr-31. Residues Lys-32–Thr-108 are Cytoplasmic-facing. Lys-42 is covalently cross-linked (Glycyl lysine isopeptide (Lys-Gly) (interchain with G-Cter in ubiquitin)). Lys-55 (schiff-base intermediate with pyridoxal 5'-phosphate) is an active-site residue. N6-acetyllysine; alternate occurs at positions 55 and 68. Residues Lys-55 and Lys-68 each participate in a glycyl lysine isopeptide (Lys-Gly) (interchain with G-Cter in ubiquitin); alternate cross-link. [2Fe-2S] cluster is bound by residues Cys-72 and Cys-74. Residues Lys-78 and Lys-79 each participate in a glycyl lysine isopeptide (Lys-Gly) (interchain with G-Cter in ubiquitin) cross-link. Residues Cys-83 and His-87 each contribute to the [2Fe-2S] cluster site. Lys-89 participates in a covalent cross-link: Glycyl lysine isopeptide (Lys-Gly) (interchain with G-Cter in ubiquitin). Position 104 is an N6-acetyllysine; alternate (Lys-104). Residue Lys-104 forms a Glycyl lysine isopeptide (Lys-Gly) (interchain with G-Cter in ubiquitin); alternate linkage. Glycyl lysine isopeptide (Lys-Gly) (interchain with G-Cter in ubiquitin) cross-links involve residues Lys-105 and Lys-106.

Belongs to the CISD protein family. Homodimer. [2Fe-2S] cluster is required as a cofactor. Requires pyridoxal 5'-phosphate as cofactor. Ubiquitinated by PRKN during mitophagy, leading to its degradation and enhancement of mitophagy. Deubiquitinated by USP30.

The protein localises to the mitochondrion outer membrane. It catalyses the reaction L-cysteine + 2-oxoglutarate = 2-oxo-3-sulfanylpropanoate + L-glutamate. Its function is as follows. L-cysteine transaminase that catalyzes the reversible transfer of the amino group from L-cysteine to the alpha-keto acid 2-oxoglutarate to respectively form 2-oxo-3-sulfanylpropanoate and L-glutamate. The catalytic cycle occurs in the presence of pyridoxal 5'-phosphate (PLP) cofactor that facilitates transamination by initially forming an internal aldimine with the epsilon-amino group of active site Lys-55 residue on the enzyme (PLP-enzyme aldimine), subsequently displaced by formation of an external aldimine with the substrate amino group (PLP-L-cysteine aldimine). The external aldimine is further deprotonated to form a carbanion intermediate, which in the presence of 2-oxoglutarate regenerates PLP yielding final products 2-oxo-3-sulfanylpropanoate and L-glutamate. The proton transfer in carbanion intermediate is suggested to be controlled by the active site lysine residue, whereas PLP stabilizes carbanion structure through electron delocalization, also known as the electron sink effect. Plays a key role in regulating maximal capacity for electron transport and oxidative phosphorylation. May be involved in iron-sulfur cluster shuttling and/or in redox reactions. Can transfer the [2Fe-2S] cluster to an apo-acceptor protein only when in the oxidation state, likely serving as a redox sensor that regulates mitochondrial iron-sulfur cluster assembly and iron trafficking upon oxidative stress. The protein is CDGSH iron-sulfur domain-containing protein 1 (Cisd1) of Rattus norvegicus (Rat).